The following is a 320-amino-acid chain: Olfactory receptor 51E2 (320 aa).

Residues 1 to 24 are Extracellular-facing; it reads MSSCNFTHATFMLIGIPGLEEAHF. N-linked (GlcNAc...) asparagine glycosylation is present at Asn-5. The chain crosses the membrane as a helical span at residues 25-45; sequence WFGFPLLSMYAVALFGNCIVV. The Cytoplasmic portion of the chain corresponds to 46–53; sequence FIVRTERS. Residues 54–74 traverse the membrane as a helical segment; it reads LHAPMYLFLCMLAAIDLALST. Over 75–98 the chain is Extracellular; the sequence is STMPKILALFWFDSREITFDACLA. The cysteines at positions 96 and 178 are disulfide-linked. The chain crosses the membrane as a helical span at residues 99-119; sequence QMFFIHALSAIESTILLAMAF. Residues 120 to 138 are Cytoplasmic-facing; sequence DRYVAICHPLRHAAVLNNT. A helical transmembrane segment spans residues 139–159; that stretch reads VTVQIGMVALVRGSLFFFPLP. The Extracellular portion of the chain corresponds to 160 to 195; it reads LLIKRLAFCHSNVLSHSYCVHQDVMKLAYTDTLPNV. A helical membrane pass occupies residues 196–216; it reads VYGLTAILLVMGVDVMFISLS. Residues 217-236 are Cytoplasmic-facing; that stretch reads YFLIIRAVLQLPSKSERAKA. A helical transmembrane segment spans residues 237 to 257; that stretch reads FGTCVSHIGVVLAFYVPLIGL. Over 258–272 the chain is Extracellular; it reads SVVHRFGNSLDPIVH. A helical membrane pass occupies residues 273–293; that stretch reads VLMGDVYLLLPPVINPIIYGA. Topologically, residues 294 to 320 are cytoplasmic; that stretch reads KTKQIRTRVLAMFKISCDKDIEAGGNT.

Belongs to the G-protein coupled receptor 1 family. Expressed in brain and liver. Expressed only in some areas of the brain and in the olfactory epithelium.

It localises to the cell membrane. The protein resides in the early endosome membrane. In terms of biological role, olfactory receptor. The activity of this receptor is probably mediated by G-proteins which induce elevation of intracellular Ca(2+), cAMP and activation of phosphorylation of the protein kinases PKA and MAPK3/MAPK1. Activation of OR51E2 may affect melanocyte proliferation, differentiation, and melanogenesis and may increase proliferation and migration of primary retinal pigment epithelial (RPE) cells. Activated by the short chain fatty acids (SCFA), acetate and propionate. In response to SCFA, may positively regulate renin secretion and increase blood pressure. May also be activated by steroid hormones and regulate cell proliferation. Activated by L-lactate in glomus cells. The chain is Olfactory receptor 51E2 (Or51e2) from Rattus norvegicus (Rat).